We begin with the raw amino-acid sequence, 83 residues long: Large ribosomal subunit protein bL31B (83 aa).

It belongs to the bacterial ribosomal protein bL31 family. Type B subfamily. Part of the 50S ribosomal subunit.

In Tropheryma whipplei (strain TW08/27) (Whipple's bacillus), this protein is Large ribosomal subunit protein bL31B.